We begin with the raw amino-acid sequence, 157 residues long: Putative pre-16S rRNA nuclease (157 aa).

Belongs to the YqgF nuclease family.

It localises to the cytoplasm. Its function is as follows. Could be a nuclease involved in processing of the 5'-end of pre-16S rRNA. The protein is Putative pre-16S rRNA nuclease of Orientia tsutsugamushi (strain Ikeda) (Rickettsia tsutsugamushi).